The following is a 607-amino-acid chain: Serine/threonine-protein kinase sid2 (607 aa).

A phosphoserine mark is found at serine 56, serine 60, serine 65, and serine 86. Over residues 93–108 (DRSGELSYKDNNHWSD) the composition is skewed to basic and acidic residues. The segment at 93 to 118 (DRSGELSYKDNNHWSDRSSTGSPRWE) is disordered. A compositionally biased stretch (polar residues) spans 109–118 (RSSTGSPRWE). A Protein kinase domain is found at 208 to 508 (FQTITQVGQG…LKQVMQHPYF (301 aa)). ATP contacts are provided by residues 214 to 222 (VGQGGYGSV) and lysine 237. Phosphotyrosine is present on tyrosine 219. Aspartate 331 functions as the Proton acceptor in the catalytic mechanism. Serine 402 carries the post-translational modification Phosphoserine. One can recognise an AGC-kinase C-terminal domain in the interval 509-589 (SKIDWKNVRT…RHQKNSHPTS (81 aa)). The segment at 586–607 (HPTSSSSALSSPLSAPSFGTLL) is disordered. Over residues 589-607 (SSSSALSSPLSAPSFGTLL) the composition is skewed to low complexity.

The protein belongs to the protein kinase superfamily. Ser/Thr protein kinase family. As to quaternary structure, interacts with mob1 and cdc11.

Its subcellular location is the cytoplasm. The protein resides in the cytoskeleton. The protein localises to the microtubule organizing center. It localises to the spindle pole body. It catalyses the reaction L-seryl-[protein] + ATP = O-phospho-L-seryl-[protein] + ADP + H(+). The catalysed reaction is L-threonyl-[protein] + ATP = O-phospho-L-threonyl-[protein] + ADP + H(+). Part of a signaling pathway. Required for initiation of medial ring constriction and septation. The protein is Serine/threonine-protein kinase sid2 (sid2) of Schizosaccharomyces pombe (strain 972 / ATCC 24843) (Fission yeast).